Here is a 656-residue protein sequence, read N- to C-terminus: uncharacterized protein (656 aa).

Residues 623–656 form a disordered region; sequence EIDIPGTPASIDPEWSRPPGSITDDHVFDAPLHR. The segment covering 645-656 has biased composition (basic and acidic residues); it reads TDDHVFDAPLHR.

This is an uncharacterized protein from Mycobacterium tuberculosis (strain CDC 1551 / Oshkosh).